Consider the following 156-residue polypeptide: uncharacterized protein (156 aa).

The 146-residue stretch at 11 to 156 (EEFRSYLTYT…ETDVVMSKKL (146 aa)) folds into the N-acetyltransferase domain.

It belongs to the acetyltransferase family. As to quaternary structure, homodimer.

This is an uncharacterized protein from Bacillus subtilis (strain 168).